Consider the following 754-residue polypeptide: MEINPYLMFLNNDVTSLISTTYPYTGPPPMSHGSSTKYTLETIKRTYDYSRTSVEKTSKVFNIPRRKFCNCLEDKDELVKPTGNVDISSLLGLAEMMEKRMGEGFFKHCVMEAETEILKMHFSRLTEGRQTYDWTSERNMPAATALQLTVDAIKETEGPFKGTTMLEYCNKMIEMLDWKEIKFKKVKTVVRREKDKRSGKEIKTKVPVMGIDSIKHDEFLIRALTINTMAKDGERGKLQRRAIATPGMIVRPFSKIVETVAQKICEKLKESGLPVGGNEKKAKLKTTVTSLNARMNSDQFAVNITGDNSKWNECQQPEAYLALLAYITKDSSDLMKDLCSVAPVLFCNKFVKLGQGIRLSNKRKTKEVIIKAEKMGKYKNLMREEYKNLFEPLEKYIQKDVCFLPGGMLMGMFNMLSTVLGVSTLCYMDEELKAKGCFWTGLQSSDDFVLFAVASNWSNIHWTIRRFNAVCKLIGINMSLEKSYGSLPELFEFTSMFFDGEFVSNLAMELPAFTTAGVNEGVDFTAAMSIIKTNMINNSLSPSTALMALRICLQEFRATYRVHPWDSRVKGGRMKIINEFIKTIENKDGLLIADGGKLMNNISTLHIPEEVLKFEKMDEQYRNRVFNPKNPFTNFDKTIDIFRAHGPIRVEENEAVVSTHSFRTRANRTLLNTDMRAMMAEEKRYQMVCDMFKSVFESADINPPIGAMSIGEAIEEKLLERAKMKRDIGAIEDSEYEEIKDIIRDAKKARLESR.

2 consecutive short sequence motifs (nuclear localization signal) follow at residues 189–197 (VVRREKDKR) and 205–218 (KVPV…KHDE). Residues 251-258 (RPFSKIVE) are promoter-binding site. A RdRp catalytic domain is found at 288-484 (VTSLNARMNS…GINMSLEKSY (197 aa)).

It belongs to the influenza viruses polymerase PB1 family. In terms of assembly, influenza RNA polymerase is composed of three subunits: PB1, PB2 and PA. Interacts (via N-terminus) with PA (via C-terminus). Interacts (via C-terminus) with PB2 (via N-terminus); this interaction is essential for transcription initiation. Phosphorylated by host PRKCA.

The protein resides in the host nucleus. It localises to the host cytoplasm. The catalysed reaction is RNA(n) + a ribonucleoside 5'-triphosphate = RNA(n+1) + diphosphate. Functionally, RNA-dependent RNA polymerase which is responsible for replication and transcription of virus RNA segments. The transcription of viral mRNAs occurs by a unique mechanism called cap-snatching. 5' methylated caps of cellular mRNAs are cleaved after 10-13 nucleotides by PA. In turn, these short capped RNAs are used as primers by PB1 for transcription of viral mRNAs. During virus replication, PB1 initiates RNA synthesis and copy vRNA into complementary RNA (cRNA) which in turn serves as a template for the production of more vRNAs. The sequence is that of RNA-directed RNA polymerase catalytic subunit from Influenza C virus (strain C/Johannesburg/1/1966).